The chain runs to 310 residues: Polyprenyl transferase ntnF (310 aa).

The next 8 membrane-spanning stretches (helical) occupy residues 30-50 (HTPE…FYAI), 63-83 (FLGI…WNDI), 110-130 (AMVA…AMLG), 154-174 (IWAP…PPWV), 185-205 (LPAS…LIYA), 230-250 (ACLT…AFEA), 255-275 (FLWV…ILSL), and 286-306 (IFLV…TDVW).

The protein belongs to the UbiA prenyltransferase family. Mg(2+) is required as a cofactor.

The protein resides in the membrane. Its pathway is secondary metabolite biosynthesis; terpenoid biosynthesis. In terms of biological role, olyprenyl transferase; part of the gene cluster that mediates the biosynthesis of the meroterpenoids nectripenoids A and B, as well as cochliquninone D and isocochliquninone E. The pathway probably begins with the HR-PKS ntnH that catalyzes two chain-extension steps to form a reduced triketide, which then primes the SAT domain in the NR-PKS ntnG to initiate three more cycles of extension to give a linear hexaketide corresponding to the polyketide part of nectripenoids. The FAD-dependent monooxygenase ntnJ then performs an oxidative decarboxylation at C11 of the ntnH/ntnG product, via an electrophilic aromatic hydroxylation with concomitant ipso-decarboxylation. The membrane-bound polyprenyl transferase ntnF then introduces a farnesyl group before the FAD-dependent monooxygenase ntnK functions as the first epoxidase on terminal C12'-C13' olefin, followed by a second epoxidation on C7'-C8' catalyzed by ntnA. The terpene cyclase/mutase ntnI then initiates the sequential tricyclic ring formation through protonation of the terminal epoxide and catalyzes the regioselective and stereoselective 6/6/6-tricyclic ring formation. The cytochrome P450 monooxygenase ntnM may then hydroxylate C1'. This chain is Polyprenyl transferase ntnF, found in Nectria sp.